The sequence spans 55 residues: Large ribosomal subunit protein bL33 (55 aa).

The span at 1–10 (MAKGGREKIK) shows a compositional bias: basic and acidic residues. The tract at residues 1–27 (MAKGGREKIKLQSTAGTGHFYTTDKNK) is disordered.

It belongs to the bacterial ribosomal protein bL33 family.

The chain is Large ribosomal subunit protein bL33 from Polaromonas naphthalenivorans (strain CJ2).